The primary structure comprises 400 residues: Methylthioribose kinase (400 aa).

Residues asparagine 40, lysine 57, and glutamate 111–leucine 113 each bind ATP. Residue aspartate 229 coordinates substrate. Aspartate 246–glutamate 248 serves as a coordination point for ATP. Arginine 344 contacts substrate.

Belongs to the methylthioribose kinase family. Homodimer.

The enzyme catalyses 5-(methylsulfanyl)-D-ribose + ATP = 5-(methylsulfanyl)-alpha-D-ribose 1-phosphate + ADP + H(+). Its pathway is amino-acid biosynthesis; L-methionine biosynthesis via salvage pathway; S-methyl-5-thio-alpha-D-ribose 1-phosphate from S-methyl-5'-thioadenosine (hydrolase route): step 2/2. In terms of biological role, catalyzes the phosphorylation of methylthioribose into methylthioribose-1-phosphate. This chain is Methylthioribose kinase, found in Pectobacterium atrosepticum (strain SCRI 1043 / ATCC BAA-672) (Erwinia carotovora subsp. atroseptica).